The chain runs to 733 residues: Tyrosine-protein kinase ptk (733 aa).

2 consecutive transmembrane segments (helical) span residues 19–39 (LFFS…LSLI) and 438–458 (LQIL…LALL). 542-550 (GPAPEVGKS) lines the ATP pocket.

The protein belongs to the etk/wzc family. The cofactor is Mg(2+). Mn(2+) serves as cofactor. In terms of processing, autophosphorylated on several Tyr residues. Dephosphorylated by ptp.

The protein resides in the cell inner membrane. It catalyses the reaction L-tyrosyl-[protein] + ATP = O-phospho-L-tyrosyl-[protein] + ADP + H(+). It participates in glycan metabolism; exopolysaccharide biosynthesis. Its function is as follows. May be involved in the production and the transport of exopolysaccharides. The polypeptide is Tyrosine-protein kinase ptk (ptk) (Acinetobacter johnsonii).